The primary structure comprises 308 residues: GTPase Era (308 aa).

The 168-residue stretch at 14–181 (RCGFVALIGA…RRALAAAMPE (168 aa)) folds into the Era-type G domain. The tract at residues 22–29 (GAPNVGKS) is G1. 22 to 29 (GAPNVGKS) is a binding site for GTP. The segment at 48–52 (QTTRA) is G2. Residues 69–72 (DTPG) form a G3 region. GTP contacts are provided by residues 69-73 (DTPGI) and 131-134 (NKID). Residues 131–134 (NKID) form a G4 region. Residues 160-162 (VAA) are G5. Residues 212–289 (LHQELPYQST…HLFLFVKVRD (78 aa)) form the KH type-2 domain.

This sequence belongs to the TRAFAC class TrmE-Era-EngA-EngB-Septin-like GTPase superfamily. Era GTPase family. Monomer.

It localises to the cytoplasm. The protein resides in the cell inner membrane. Its function is as follows. An essential GTPase that binds both GDP and GTP, with rapid nucleotide exchange. Plays a role in 16S rRNA processing and 30S ribosomal subunit biogenesis and possibly also in cell cycle regulation and energy metabolism. The protein is GTPase Era of Afipia carboxidovorans (strain ATCC 49405 / DSM 1227 / KCTC 32145 / OM5) (Oligotropha carboxidovorans).